A 309-amino-acid polypeptide reads, in one-letter code: Prepilin leader peptidase/N-methyltransferase (309 aa).

Residues 35 to 55 (MQLAFAIVLGLVVGSFLNVVV) traverse the membrane as a helical segment. Zn(2+)-binding residues include cysteine 96, cysteine 99, cysteine 121, and cysteine 124. 6 consecutive transmembrane segments (helical) span residues 147-167 (LALF…AALL), 183-203 (LTLP…FASL), 207-227 (VIGA…FKLL), 230-250 (IEGI…WLGW), 253-273 (LPQV…VATW), and 288-308 (FLAA…LLLG).

This sequence belongs to the peptidase A24 family. Zn(2+) is required as a cofactor.

It is found in the cell inner membrane. It carries out the reaction Typically cleaves a -Gly-|-Phe- bond to release an N-terminal, basic peptide of 5-8 residues from type IV prepilin, and then N-methylates the new N-terminal amino group, the methyl donor being S-adenosyl-L-methionine.. In terms of biological role, plays an essential role in type IV pili and type II pseudopili formation by proteolytically removing the leader sequence from substrate proteins and subsequently monomethylating the alpha-amino group of the newly exposed N-terminal phenylalanine. The protein is Prepilin leader peptidase/N-methyltransferase (gspO) of Burkholderia pseudomallei (strain 1026b).